A 272-amino-acid chain; its full sequence is ATP synthase subunit a (272 aa).

A run of 5 helical transmembrane segments spans residues 41–61 (TLNI…LALF), 102–122 (IAPL…MDLV), 147–167 (DVNI…FYSI), 212–232 (LFGN…LLPW), and 243–263 (AIFH…LTIV).

The protein belongs to the ATPase A chain family. As to quaternary structure, F-type ATPases have 2 components, CF(1) - the catalytic core - and CF(0) - the membrane proton channel. CF(1) has five subunits: alpha(3), beta(3), gamma(1), delta(1), epsilon(1). CF(0) has three main subunits: a(1), b(2) and c(9-12). The alpha and beta chains form an alternating ring which encloses part of the gamma chain. CF(1) is attached to CF(0) by a central stalk formed by the gamma and epsilon chains, while a peripheral stalk is formed by the delta and b chains.

The protein resides in the cell inner membrane. In terms of biological role, key component of the proton channel; it plays a direct role in the translocation of protons across the membrane. The chain is ATP synthase subunit a from Edwardsiella ictaluri (strain 93-146).